Consider the following 242-residue polypeptide: Lactate utilization protein A 2 (242 aa).

This sequence belongs to the LutA/YkgE family.

Functionally, is involved in L-lactate degradation and allows cells to grow with lactate as the sole carbon source. The sequence is that of Lactate utilization protein A 2 from Bacillus cereus (strain ZK / E33L).